We begin with the raw amino-acid sequence, 286 residues long: 4-hydroxybenzoate octaprenyltransferase (286 aa).

The next 8 membrane-spanning stretches (helical) occupy residues 20–40 (IGTF…AGGM), 43–63 (LKVL…GCII), 95–115 (ILFV…NPLV), 116–136 (VQLS…KRFT), 142–162 (FLGV…LGTV), 167–187 (WWLF…YAMV), 210–230 (QIIG…GLSA), and 235–255 (VFAL…KLIF).

The protein belongs to the UbiA prenyltransferase family. Requires Mg(2+) as cofactor.

The protein localises to the cell inner membrane. The enzyme catalyses all-trans-octaprenyl diphosphate + 4-hydroxybenzoate = 4-hydroxy-3-(all-trans-octaprenyl)benzoate + diphosphate. It participates in cofactor biosynthesis; ubiquinone biosynthesis. In terms of biological role, catalyzes the prenylation of para-hydroxybenzoate (PHB) with an all-trans polyprenyl group. Mediates the second step in the final reaction sequence of ubiquinone-8 (UQ-8) biosynthesis, which is the condensation of the polyisoprenoid side chain with PHB, generating the first membrane-bound Q intermediate 3-octaprenyl-4-hydroxybenzoate. The sequence is that of 4-hydroxybenzoate octaprenyltransferase from Shewanella loihica (strain ATCC BAA-1088 / PV-4).